The chain runs to 407 residues: Serpin-Z2 (407 aa).

Residues 1–28 (MDSKRKNQELSTSETADPSLSKTNKKQK) are disordered. Polar residues predominate over residues 9–22 (ELSTSETADPSLSK). The interval 344 to 368 (GTEAAAATTVVVVTGSCLWEPKKKI) is RCL.

Belongs to the serpin family.

Its function is as follows. Probable serine protease inhibitor. The polypeptide is Serpin-Z2 (Arabidopsis thaliana (Mouse-ear cress)).